A 151-amino-acid polypeptide reads, in one-letter code: uncharacterized protein (151 aa).

This is an uncharacterized protein from Escherichia coli.